The chain runs to 393 residues: Arginine biosynthesis bifunctional protein ArgJ 3 (393 aa).

6 residues coordinate substrate: T148, K170, T181, E260, N388, and T393. T181 serves as the catalytic Nucleophile.

The protein belongs to the ArgJ family. As to quaternary structure, heterotetramer of two alpha and two beta chains.

It is found in the cytoplasm. The enzyme catalyses N(2)-acetyl-L-ornithine + L-glutamate = N-acetyl-L-glutamate + L-ornithine. It carries out the reaction L-glutamate + acetyl-CoA = N-acetyl-L-glutamate + CoA + H(+). It functions in the pathway amino-acid biosynthesis; L-arginine biosynthesis; L-ornithine and N-acetyl-L-glutamate from L-glutamate and N(2)-acetyl-L-ornithine (cyclic): step 1/1. It participates in amino-acid biosynthesis; L-arginine biosynthesis; N(2)-acetyl-L-ornithine from L-glutamate: step 1/4. In terms of biological role, catalyzes two activities which are involved in the cyclic version of arginine biosynthesis: the synthesis of N-acetylglutamate from glutamate and acetyl-CoA as the acetyl donor, and of ornithine by transacetylation between N(2)-acetylornithine and glutamate. In Streptomyces clavuligerus, this protein is Arginine biosynthesis bifunctional protein ArgJ 3.